A 504-amino-acid chain; its full sequence is Glucose-6-phosphate isomerase (504 aa).

The active-site Proton donor is glutamate 333. Catalysis depends on residues histidine 364 and lysine 473.

This sequence belongs to the GPI family.

The protein resides in the cytoplasm. The catalysed reaction is alpha-D-glucose 6-phosphate = beta-D-fructose 6-phosphate. The protein operates within carbohydrate biosynthesis; gluconeogenesis. It functions in the pathway carbohydrate degradation; glycolysis; D-glyceraldehyde 3-phosphate and glycerone phosphate from D-glucose: step 2/4. Catalyzes the reversible isomerization of glucose-6-phosphate to fructose-6-phosphate. This Stenotrophomonas maltophilia (strain K279a) protein is Glucose-6-phosphate isomerase.